A 215-amino-acid polypeptide reads, in one-letter code: Protein GET1 (215 aa).

Residues 1–4 lie on the Lumenal side of the membrane; it reads MINL. Residues 5 to 24 traverse the membrane as a helical segment; that stretch reads ALVIFLCTLLNQIVSWVGKS. At 25-108 the chain is on the cytoplasmic side; sequence VLQEIAFTAY…SFSKKFSTLL (84 aa). The stretch at 73–94 forms a coiled coil; that stretch reads AKLRRKLDKGLADLEKTNNTLS. The helical transmembrane segment at 109 to 129 threads the bilayer; the sequence is WLMTTGAQFLLSWWFRKQPIF. The Lumenal segment spans residues 130 to 153; sequence WLPEGWVPYPVAWLLSFPSAPIGS. Residues 154-170 form a helical membrane-spanning segment; the sequence is VSSGAWGAICRRVLSTL. The Cytoplasmic segment spans residues 171 to 215; the sequence is QEIIQSLLAPSPAATGPVPTGPSSAKNDQPEAKIEALALEHEKLD. The disordered stretch occupies residues 182 to 202; the sequence is PAATGPVPTGPSSAKNDQPEA.

The protein belongs to the WRB/GET1 family. Interacts with GET3.

It localises to the endoplasmic reticulum membrane. Required for the post-translational delivery of tail-anchored (TA) proteins to the endoplasmic reticulum. Acts as a membrane receptor for soluble GET3, which recognizes and selectively binds the transmembrane domain of TA proteins in the cytosol. The protein is Protein GET1 of Cryptococcus neoformans var. neoformans serotype D (strain JEC21 / ATCC MYA-565) (Filobasidiella neoformans).